A 524-amino-acid polypeptide reads, in one-letter code: M phase phosphoprotein 10 (524 aa).

The short motif at 85 to 92 is the Nuclear localization signal 1 element; sequence VKRFAKNP. 2 disordered regions span residues 100–243 and 259–283; these read KLAL…KLGK and KLKDLSEDEEAEIENKGNEKLSTHE. Acidic residues predominate over residues 109–168; it reads DDIDEMDMDGFDSDDVDDEDKEIESNDSEGEDEEEEEEDEEEEEEEEEEEEEEKDGDNEG. The stretch at 131–165 forms a coiled coil; that stretch reads IESNDSEGEDEEEEEEDEEEEEEEEEEEEEEKDGD. Residues 169-180 are compositionally biased toward basic and acidic residues; it reads IEDKFFKIKELE. The segment covering 181–191 has biased composition (acidic residues); it reads EFLEEGEAEEY. Over residues 196–207 the composition is skewed to basic residues; that stretch reads KNKKGVAQRKKQ. The span at 210–238 shows a compositional bias: acidic residues; the sequence is SDDEDEEDDDDEEEDVEFDAFAGGDDEET. Positions 257-302 form a coiled coil; it reads KMKLKDLSEDEEAEIENKGNEKLSTHERARLKLQSKIEQMEKANLD. Basic and acidic residues predominate over residues 271 to 283; it reads IENKGNEKLSTHE. The Nuclear localization signal 2 signature appears at 373-380; the sequence is GKREAKEL. The segment at 479–524 is disordered; the sequence is KGDIKDESELTQEDRKRRRANKKRKFKAESANEPPKKALDTSTKNP. Over residues 480-493 the composition is skewed to basic and acidic residues; sequence GDIKDESELTQEDR. The span at 494–504 shows a compositional bias: basic residues; it reads KRRRANKKRKF. Positions 505–517 are enriched in basic and acidic residues; that stretch reads KAESANEPPKKAL.

This sequence belongs to the MPP10 family. In terms of assembly, component of the ribosomal small subunit (SSU) processome. Interacts with THAL in the nucleus.

Its subcellular location is the nucleus. It is found in the nucleolus. Involved in nucleolar processing of pre-18S ribosomal RNA. This chain is M phase phosphoprotein 10, found in Arabidopsis thaliana (Mouse-ear cress).